A 378-amino-acid chain; its full sequence is UPF0754 membrane protein BCAH187_A1042 (378 aa).

A run of 2 helical transmembrane segments spans residues 1 to 21 (MNIWLSMLTTTGLGAIIGGFT) and 357 to 377 (YLGALLGGMIGIVQGLLLLFL).

The protein belongs to the UPF0754 family.

The protein localises to the cell membrane. This chain is UPF0754 membrane protein BCAH187_A1042, found in Bacillus cereus (strain AH187).